Consider the following 78-residue polypeptide: Large ribosomal subunit protein bL28 (78 aa).

This sequence belongs to the bacterial ribosomal protein bL28 family.

The sequence is that of Large ribosomal subunit protein bL28 from Synechococcus sp. (strain ATCC 27144 / PCC 6301 / SAUG 1402/1) (Anacystis nidulans).